Reading from the N-terminus, the 479-residue chain is GTPase Der (479 aa).

EngA-type G domains lie at 3–166 and 192–365; these read PVVA…AEEY and LKLA…ASAT. Residues 9–16, 56–60, 118–121, 198–205, 245–249, and 310–313 contribute to the GTP site; these read GRPNVGKS, DTGGI, NKID, DTAGV, and NKWD. Residues 366-450 form the KH-like domain; sequence QRISTSKLTK…PIKVEFREPV (85 aa).

Belongs to the TRAFAC class TrmE-Era-EngA-EngB-Septin-like GTPase superfamily. EngA (Der) GTPase family. Associates with the 50S ribosomal subunit.

Functionally, GTPase that plays an essential role in the late steps of ribosome biogenesis. The sequence is that of GTPase Der from Idiomarina loihiensis (strain ATCC BAA-735 / DSM 15497 / L2-TR).